A 95-amino-acid polypeptide reads, in one-letter code: Aspartyl/glutamyl-tRNA(Asn/Gln) amidotransferase subunit C (95 aa).

Belongs to the GatC family. As to quaternary structure, heterotrimer of A, B and C subunits.

It catalyses the reaction L-glutamyl-tRNA(Gln) + L-glutamine + ATP + H2O = L-glutaminyl-tRNA(Gln) + L-glutamate + ADP + phosphate + H(+). It carries out the reaction L-aspartyl-tRNA(Asn) + L-glutamine + ATP + H2O = L-asparaginyl-tRNA(Asn) + L-glutamate + ADP + phosphate + 2 H(+). In terms of biological role, allows the formation of correctly charged Asn-tRNA(Asn) or Gln-tRNA(Gln) through the transamidation of misacylated Asp-tRNA(Asn) or Glu-tRNA(Gln) in organisms which lack either or both of asparaginyl-tRNA or glutaminyl-tRNA synthetases. The reaction takes place in the presence of glutamine and ATP through an activated phospho-Asp-tRNA(Asn) or phospho-Glu-tRNA(Gln). In Pelagibacter ubique (strain HTCC1062), this protein is Aspartyl/glutamyl-tRNA(Asn/Gln) amidotransferase subunit C.